A 253-amino-acid polypeptide reads, in one-letter code: MSDKKTKIQVRDLDLFYASNHALKKINIDIKENEVTALIGPSGCGKSTFLRTLNRMNDLIPIVRIEGEIQVDGKDIYKDDDVIALRTKVGMVFQKPNLFPMSIYDNVAYGPRVHGIKDKKVLDKIVEESLRDAAIWDEVKNRLKSSALGLSGGQQQRICIARAIAMNPEIILMDEPTSALDPISTLKVEELIRKLEDKYTIVIVTHNMQQAARISDKTAFFLNGELVEFSDTNTIFTNPRDKRTEDYITGRFG.

An ABC transporter domain is found at 8–248 (IQVRDLDLFY…PRDKRTEDYI (241 aa)). An ATP-binding site is contributed by 40–47 (GPSGCGKS).

The protein belongs to the ABC transporter superfamily. Phosphate importer (TC 3.A.1.7) family. The complex is composed of two ATP-binding proteins (PstB), two transmembrane proteins (PstC and PstA) and a solute-binding protein (PstS).

It localises to the cell membrane. The enzyme catalyses phosphate(out) + ATP + H2O = ADP + 2 phosphate(in) + H(+). Its function is as follows. Part of the ABC transporter complex PstSACB involved in phosphate import. Responsible for energy coupling to the transport system. This chain is Phosphate import ATP-binding protein PstB, found in Clostridium perfringens (strain ATCC 13124 / DSM 756 / JCM 1290 / NCIMB 6125 / NCTC 8237 / Type A).